The chain runs to 231 residues: 5'-methylthioadenosine/S-adenosylhomocysteine nucleosidase (231 aa).

The active-site Proton acceptor is the glutamate 12. Residues glycine 78, valine 153, and 174–175 (ME) contribute to the substrate site. Residue aspartate 198 is the Proton donor of the active site.

It belongs to the PNP/UDP phosphorylase family. MtnN subfamily.

The enzyme catalyses S-adenosyl-L-homocysteine + H2O = S-(5-deoxy-D-ribos-5-yl)-L-homocysteine + adenine. It carries out the reaction S-methyl-5'-thioadenosine + H2O = 5-(methylsulfanyl)-D-ribose + adenine. The catalysed reaction is 5'-deoxyadenosine + H2O = 5-deoxy-D-ribose + adenine. The protein operates within amino-acid biosynthesis; L-methionine biosynthesis via salvage pathway; S-methyl-5-thio-alpha-D-ribose 1-phosphate from S-methyl-5'-thioadenosine (hydrolase route): step 1/2. Functionally, catalyzes the irreversible cleavage of the glycosidic bond in both 5'-methylthioadenosine (MTA) and S-adenosylhomocysteine (SAH/AdoHcy) to adenine and the corresponding thioribose, 5'-methylthioribose and S-ribosylhomocysteine, respectively. Also cleaves 5'-deoxyadenosine, a toxic by-product of radical S-adenosylmethionine (SAM) enzymes, into 5-deoxyribose and adenine. This is 5'-methylthioadenosine/S-adenosylhomocysteine nucleosidase from Vibrio cholerae serotype O1 (strain ATCC 39315 / El Tor Inaba N16961).